The sequence spans 198 residues: Na(+)-translocating NADH-quinone reductase subunit E (198 aa).

6 helical membrane passes run 11-31, 39-59, 77-97, 110-130, 140-160, and 176-196; these read SIFI…FLAV, FGLG…NNLV, FLNF…LEMI, GIFL…SFMV, VVYG…LAGI, and LGIT…FSGV.

Belongs to the NqrDE/RnfAE family. Composed of six subunits; NqrA, NqrB, NqrC, NqrD, NqrE and NqrF.

The protein resides in the cell inner membrane. It carries out the reaction a ubiquinone + n Na(+)(in) + NADH + H(+) = a ubiquinol + n Na(+)(out) + NAD(+). In terms of biological role, NQR complex catalyzes the reduction of ubiquinone-1 to ubiquinol by two successive reactions, coupled with the transport of Na(+) ions from the cytoplasm to the periplasm. NqrA to NqrE are probably involved in the second step, the conversion of ubisemiquinone to ubiquinol. This chain is Na(+)-translocating NADH-quinone reductase subunit E, found in Vibrio anguillarum (Listonella anguillarum).